We begin with the raw amino-acid sequence, 298 residues long: Pheromone-regulated membrane protein 9 (298 aa).

Over 1-111 (MSPQYHFYFV…YWIYEVTRHK (111 aa)) the chain is Cytoplasmic. Residues 112–132 (AAVILLVLIVTSILLLVFFYN) traverse the membrane as a helical segment. Topologically, residues 133 to 137 (TEFCV) are extracellular. A helical transmembrane segment spans residues 138–158 (AFEILLFSFCFPGTCMVVIAF). Residues 159–298 (SEPIGDREFK…QEYPGVDEFF (140 aa)) are Cytoplasmic-facing. Positions 235–262 (SSASNVKDAQSNDETAGTPNEAAESSSF) are disordered. The COPII binding stretch occupies residues 297–298 (FF).

This sequence belongs to the DUP/COS family. Interacts with PRM8. Binds to COPII coated vesicles.

It localises to the cell membrane. In terms of biological role, may be involved in endoplasmic reticulum exit trafficking of proteins. The sequence is that of Pheromone-regulated membrane protein 9 (PRM9) from Saccharomyces cerevisiae (strain ATCC 204508 / S288c) (Baker's yeast).